The sequence spans 494 residues: Glutamate decarboxylase 2 (494 aa).

Lys276 carries the N6-(pyridoxal phosphate)lysine modification. The interval 463–494 is calmodulin-binding; sequence VKEKKMEKEILMEVIVGWRKFVKERKKMNGVC.

It belongs to the group II decarboxylase family. Homohexamer. Interacts with calmodulin. Pyridoxal 5'-phosphate is required as a cofactor. In terms of tissue distribution, expressed in roots, inflorescence stems, flowers, siliques and leaves.

It carries out the reaction L-glutamate + H(+) = 4-aminobutanoate + CO2. Up-regulated by calmodulin binding at physiological pH. Its function is as follows. Catalyzes the conversion of glutamate to 4-aminobutanoate (GABA). The calmodulin-binding is calcium-dependent and it is proposed to directly or indirectly form a calcium regulated control of GABA biosynthesis. This chain is Glutamate decarboxylase 2 (GAD2), found in Arabidopsis thaliana (Mouse-ear cress).